Here is a 245-residue protein sequence, read N- to C-terminus: Ribonuclease PH (245 aa).

Phosphate-binding positions include Arg93 and 131–133; that span reads GTR.

The protein belongs to the RNase PH family. Homohexameric ring arranged as a trimer of dimers.

The enzyme catalyses tRNA(n+1) + phosphate = tRNA(n) + a ribonucleoside 5'-diphosphate. In terms of biological role, phosphorolytic 3'-5' exoribonuclease that plays an important role in tRNA 3'-end maturation. Removes nucleotide residues following the 3'-CCA terminus of tRNAs; can also add nucleotides to the ends of RNA molecules by using nucleoside diphosphates as substrates, but this may not be physiologically important. Probably plays a role in initiation of 16S rRNA degradation (leading to ribosome degradation) during starvation. This is Ribonuclease PH from Corynebacterium glutamicum (strain ATCC 13032 / DSM 20300 / JCM 1318 / BCRC 11384 / CCUG 27702 / LMG 3730 / NBRC 12168 / NCIMB 10025 / NRRL B-2784 / 534).